Consider the following 210-residue polypeptide: MSLPPEILLHGYSIGIFPMAEHRNDPDVFWVDPIRRGVFPLNGFHLSRSLARRMRRGGYQVSIDRDFAGVLDGCADRAETWINPEIRASYLALHHLGHAHSLEVWQAGQLIGGVYGVVLGAAFFGESMFSRRTDASKIALAHLVDRLRQTGFALFDTQFLTAHLASLGAVEIPRAEYRRQLERALNGAADFAAVIEQSPQGVIQRITQTS.

Belongs to the L/F-transferase family.

The protein resides in the cytoplasm. The enzyme catalyses N-terminal L-lysyl-[protein] + L-leucyl-tRNA(Leu) = N-terminal L-leucyl-L-lysyl-[protein] + tRNA(Leu) + H(+). It catalyses the reaction N-terminal L-arginyl-[protein] + L-leucyl-tRNA(Leu) = N-terminal L-leucyl-L-arginyl-[protein] + tRNA(Leu) + H(+). The catalysed reaction is L-phenylalanyl-tRNA(Phe) + an N-terminal L-alpha-aminoacyl-[protein] = an N-terminal L-phenylalanyl-L-alpha-aminoacyl-[protein] + tRNA(Phe). Functions in the N-end rule pathway of protein degradation where it conjugates Leu, Phe and, less efficiently, Met from aminoacyl-tRNAs to the N-termini of proteins containing an N-terminal arginine or lysine. The polypeptide is Leucyl/phenylalanyl-tRNA--protein transferase (Ruegeria pomeroyi (strain ATCC 700808 / DSM 15171 / DSS-3) (Silicibacter pomeroyi)).